Here is a 951-residue protein sequence, read N- to C-terminus: Valine--tRNA ligase (951 aa).

The 'HIGH' region signature appears at 42 to 52 (PNVTGSLHMGH). Positions 554 to 558 (KMSKS) match the 'KMSKS' region motif. Lys557 contacts ATP. Positions 880 to 944 (AGLINKEDEL…AEAKAKLIEQ (65 aa)) form a coiled coil.

This sequence belongs to the class-I aminoacyl-tRNA synthetase family. ValS type 1 subfamily. In terms of assembly, monomer.

The protein localises to the cytoplasm. The enzyme catalyses tRNA(Val) + L-valine + ATP = L-valyl-tRNA(Val) + AMP + diphosphate. Catalyzes the attachment of valine to tRNA(Val). As ValRS can inadvertently accommodate and process structurally similar amino acids such as threonine, to avoid such errors, it has a 'posttransfer' editing activity that hydrolyzes mischarged Thr-tRNA(Val) in a tRNA-dependent manner. The protein is Valine--tRNA ligase of Salmonella paratyphi A (strain ATCC 9150 / SARB42).